A 698-amino-acid chain; its full sequence is Glycine--tRNA ligase beta subunit (698 aa).

This sequence belongs to the class-II aminoacyl-tRNA synthetase family. In terms of assembly, tetramer of two alpha and two beta subunits.

The protein resides in the cytoplasm. The enzyme catalyses tRNA(Gly) + glycine + ATP = glycyl-tRNA(Gly) + AMP + diphosphate. In Xanthomonas campestris pv. campestris (strain B100), this protein is Glycine--tRNA ligase beta subunit.